The sequence spans 1096 residues: MLRYTCHALFLGSLVLLSGCDNSSSSSTSGSPGSPGNPGNPGTPGTPDPQDVVVRLPDVAVPGEAVQASARQAVIHLVDIAGITSSTPADYATKNLYLWNNETCDALSAPVADWNDVSTTPTGSDKYGPYWVIPLTKESGSINVIVRDGTNKLIDSGRVSFSDFTDRTVSVIAGNSAVYDSRADAFRAAFGVALADAHWVDKTTLLWPGGENKPIVRLYYSHSSKVAADSNGEFSDKYVKLTPTTVNQQVSMRFPHLASYPAFKLPDDVNVDELLQGDDGGIAESDGILSLSHPGADRRRAGRYLCRRAEALSYGAQLTDSGVTFRVWAPTAQQVELVIYSADKKVIASHPMTRDSASGAWSWQGGSDLKGAFYRYAMTVYHPQSRKVEQYEVTDPYAHSLSTNSEYSQVVDLNDSALKPEGWDGLTMPHAQKTKADLAKMTIHESHIRDLSAWDQTVPAELRGKYLALTAQESNMVQHLKQLSASGVTHIELLPVFDLATVNEFSDKVADIQQPFSRLCEVNSAVKSSEFAGYCDSGSTVEEVLTQLKQNDSKDNPQVQALNTLVAQTDSYNWGYDPFHYTVPEGSYATDPEGTARIKEFRTMIQAIKQDLGMNVIMDVVYNHTNAAGPTDRTSVLDKIVPWYYQRLNETTGSVESATCCSDSAPEHRMFAKLIADSLAVWTTDYKIDGFRFDLMGYHPKAQILSAWERIKALNPDIYFFGEGWDSNQSDRFEIASQINLKGTGIGTFSDRLRDAVRGGGPFDSGDALRQNQGVGSGAGVLPNELTTLSDDQARHLADLTRLGMAGNLADFVLIDKDGAVKRGSEIDYNGAPGGYAADPTEVVNYVSKHDNQTLWDMISYKAAQEADLDTRVRMQAVSLATVMLGQGIAFDQQGSELLRSKSFTRDSYDSGDWFNRVDYSLQDNNYNVGMPRSSDDGSNYDIIARVKDAVATPGETELKQMTAFYQELTALRKSSPLFTLGDGATVMKRVDFRNTGADQQTGLLVMTIDDGMQAGRQSGQPCRRHRGGDQRRAGKPDAAGLRRHIAPAERYSAGGGRPVAGERVQVAADGSVTLPAWSVAVLELPQASRRALACR.

The N-terminal stretch at 1-19 is a signal peptide; sequence MLRYTCHALFLGSLVLLSG. Residue C20 is the site of N-palmitoyl cysteine attachment. C20 carries the S-diacylglycerol cysteine lipid modification. The span at 24–34 shows a compositional bias: low complexity; sequence SSSSTSGSPGS. A disordered region spans residues 24–50; sequence SSSSTSGSPGSPGNPGNPGTPGTPDPQ. Catalysis depends on D694, which acts as the Nucleophile. The active-site Proton donor is the E723. Positions 1014-1044 are disordered; it reads QAGRQSGQPCRRHRGGDQRRAGKPDAAGLRR.

It belongs to the glycosyl hydrolase 13 family. In terms of assembly, homotrimer.

The protein localises to the cell membrane. It catalyses the reaction Hydrolysis of (1-&gt;6)-alpha-D-glucosidic linkages in pullulan, amylopectin and glycogen, and in the alpha- and beta-limit dextrins of amylopectin and glycogen.. The sequence is that of Pullulanase (pulA) from Klebsiella aerogenes (Enterobacter aerogenes).